The sequence spans 249 residues: Transmembrane protein 106C (249 aa).

The interval 1-26 is disordered; it reads MGSRHSTYAHRPFSKRRKADDTEDSL. The N-myristoyl glycine moiety is linked to residue glycine 2. The next 2 helical transmembrane spans lie at 86–106 and 197–217; these read YVLL…FFLF and SYVY…VVFV.

The protein belongs to the TMEM106 family. As to quaternary structure, interacts with TMEM106B.

Its subcellular location is the endoplasmic reticulum membrane. It is found in the membrane. The polypeptide is Transmembrane protein 106C (TMEM106C) (Bos taurus (Bovine)).